The primary structure comprises 347 residues: D-alanine--D-alanine ligase (347 aa).

In terms of domain architecture, ATP-grasp spans 134–332 (KLYAKDLGVK…LAQSLPKTPK (199 aa)). 161–216 (LIGFNFPFIIKPSNAGSSLGVSVVKEEKELIYALDGAFEYSKEILIEPFIQGVKEY) is an ATP binding site. Residues Asp288, Glu300, and Asn302 each contribute to the Mg(2+) site.

It belongs to the D-alanine--D-alanine ligase family. Mg(2+) serves as cofactor. The cofactor is Mn(2+).

The protein localises to the cytoplasm. It catalyses the reaction 2 D-alanine + ATP = D-alanyl-D-alanine + ADP + phosphate + H(+). The protein operates within cell wall biogenesis; peptidoglycan biosynthesis. In terms of biological role, cell wall formation. The polypeptide is D-alanine--D-alanine ligase (Helicobacter pylori (strain Shi470)).